Reading from the N-terminus, the 213-residue chain is Glutathione S-transferase DHAR2 (213 aa).

Position 6 is an S-glutathionyl cysteine (C6). Positions 8 and 19 each coordinate glutathione. K8 and D19 together coordinate L-ascorbate. In terms of domain architecture, GST N-terminal spans A10–K83. Position 20 is an S-glutathionyl cysteine (C20). The active-site Nucleophile is C20. The short motif at C20–R25 is the Glutathione-binding element. Glutathione contacts are provided by K47, V60, S73, H160, and W207. In terms of domain architecture, GST C-terminal spans Y84–A213. L-ascorbate is bound at residue K210.

This sequence belongs to the GST superfamily. DHAR family. As to quaternary structure, monomer. Spontaneous S-glutathionylation in the presence of oxidized glutathione (GSSG).

The protein resides in the cytoplasm. The protein localises to the cytosol. The enzyme catalyses RX + glutathione = an S-substituted glutathione + a halide anion + H(+). The catalysed reaction is L-dehydroascorbate + 2 glutathione = glutathione disulfide + L-ascorbate. In terms of biological role, displays a dual function. As a soluble protein, exhibits glutathione-dependent thiol transferase and dehydroascorbate (DHA) reductase activities. Exhibits glutathione-dependent thiol transferase and dehydroascorbate (DHA) reductase activities. Key component of the ascorbate recycling system. Involved in the redox homeostasis, especially in scavenging of ROS under oxidative stresses. Plays a role in ozone tolerance. The chain is Glutathione S-transferase DHAR2 (DHAR2) from Arabidopsis thaliana (Mouse-ear cress).